We begin with the raw amino-acid sequence, 1579 residues long: Pentafunctional AROM polypeptide (1579 aa).

Residues 1–383 (MLVKVPILGR…YGKSAHVVSD (383 aa)) form a 3-dehydroquinate synthase region. NAD(+) is bound by residues 40 to 42 (DSN), 75 to 78 (EANK), 106 to 108 (GGI), and D111. R122 is a binding site for 7-phospho-2-dehydro-3-deoxy-D-arabino-heptonate. NAD(+) is bound at residue 131–132 (TS). The 7-phospho-2-dehydro-3-deoxy-D-arabino-heptonate site is built by D138 and K144. K153 lines the NAD(+) pocket. Residue N154 participates in 7-phospho-2-dehydro-3-deoxy-D-arabino-heptonate binding. Residues 171 to 174 (WLQS) and N182 contribute to the NAD(+) site. A Zn(2+)-binding site is contributed by E186. Residues 186-189 (EVIK) and K249 each bind 7-phospho-2-dehydro-3-deoxy-D-arabino-heptonate. E259 (proton acceptor; for 3-dehydroquinate synthase activity) is an active-site residue. 7-phospho-2-dehydro-3-deoxy-D-arabino-heptonate is bound by residues 263–267 (RNLLN) and H270. Zn(2+) is bound at residue H270. H274 acts as the Proton acceptor; for 3-dehydroquinate synthase activity in catalysis. Positions 286 and 355 each coordinate 7-phospho-2-dehydro-3-deoxy-D-arabino-heptonate. Residue H286 participates in Zn(2+) binding. The segment at 396–862 (VYPFNNIPRD…WDVLHTELGA (467 aa)) is EPSP synthase. C844 serves as the catalytic For EPSP synthase activity. Residues 881–1071 (SVVIIGMRAA…IPTRRSAFVC (191 aa)) form a shikimate kinase region. 886 to 893 (GMRAAGKT) serves as a coordination point for ATP. Residues 1072–1284 (LTFENLTEYT…AAPGQLTVAE (213 aa)) are 3-dehydroquinase. The active-site Proton acceptor; for 3-dehydroquinate dehydratase activity is the H1189. K1218 acts as the Schiff-base intermediate with substrate; for 3-dehydroquinate dehydratase activity in catalysis. The segment at 1297–1579 (KKDFFVVGSP…KAIYDAVTEI (283 aa)) is shikimate dehydrogenase.

It in the N-terminal section; belongs to the sugar phosphate cyclases superfamily. Dehydroquinate synthase family. This sequence in the 2nd section; belongs to the EPSP synthase family. In the 3rd section; belongs to the shikimate kinase family. The protein in the 4th section; belongs to the type-I 3-dehydroquinase family. It in the C-terminal section; belongs to the shikimate dehydrogenase family. In terms of assembly, homodimer. Requires Zn(2+) as cofactor.

The protein localises to the cytoplasm. The catalysed reaction is 7-phospho-2-dehydro-3-deoxy-D-arabino-heptonate = 3-dehydroquinate + phosphate. It catalyses the reaction 3-dehydroquinate = 3-dehydroshikimate + H2O. The enzyme catalyses shikimate + NADP(+) = 3-dehydroshikimate + NADPH + H(+). It carries out the reaction shikimate + ATP = 3-phosphoshikimate + ADP + H(+). The catalysed reaction is 3-phosphoshikimate + phosphoenolpyruvate = 5-O-(1-carboxyvinyl)-3-phosphoshikimate + phosphate. It functions in the pathway metabolic intermediate biosynthesis; chorismate biosynthesis; chorismate from D-erythrose 4-phosphate and phosphoenolpyruvate: step 2/7. It participates in metabolic intermediate biosynthesis; chorismate biosynthesis; chorismate from D-erythrose 4-phosphate and phosphoenolpyruvate: step 3/7. Its pathway is metabolic intermediate biosynthesis; chorismate biosynthesis; chorismate from D-erythrose 4-phosphate and phosphoenolpyruvate: step 4/7. The protein operates within metabolic intermediate biosynthesis; chorismate biosynthesis; chorismate from D-erythrose 4-phosphate and phosphoenolpyruvate: step 5/7. It functions in the pathway metabolic intermediate biosynthesis; chorismate biosynthesis; chorismate from D-erythrose 4-phosphate and phosphoenolpyruvate: step 6/7. In terms of biological role, the AROM polypeptide catalyzes 5 consecutive enzymatic reactions in prechorismate polyaromatic amino acid biosynthesis. The polypeptide is Pentafunctional AROM polypeptide (Candida glabrata (strain ATCC 2001 / BCRC 20586 / JCM 3761 / NBRC 0622 / NRRL Y-65 / CBS 138) (Yeast)).